Consider the following 492-residue polypeptide: NADH-quinone oxidoreductase subunit N (492 aa).

14 consecutive transmembrane segments (helical) span residues 5–25, 37–57, 72–92, 104–124, 129–149, 164–184, 205–225, 239–259, 276–295, 302–322, 337–357, 380–400, 414–434, and 466–486; these read PMTALLPDALVMAAIVVAWLI, TYFIALLSTVVAGIWFAIDAL, VVDPFASVMKAVVSLGYAVSI, LYEGNFFLLGMFSLLGQLVMI, FLTLYLGLELMSLSLYAAIAL, YVLGALASGFLLYGISMLYGA, VVLLFGVIFIVAGVAFKMGAV, PTAMTLIVGGGPKVAAFAWGL, MLVILAALSLIVGNITGIVQ, LAYSAISNMGFVLLGLLAGVV, MFYSIVYLITTLGSFGVVMLL, FAFVMMVMMFSLAGIPPAVGF, GLTWLAVLAVITSLFGAFYYL, and VAVLVLGIVPGPLMSICLNAI.

It belongs to the complex I subunit 2 family. NDH-1 is composed of 14 different subunits. Subunits NuoA, H, J, K, L, M, N constitute the membrane sector of the complex.

The protein localises to the cell inner membrane. It carries out the reaction a quinone + NADH + 5 H(+)(in) = a quinol + NAD(+) + 4 H(+)(out). Its function is as follows. NDH-1 shuttles electrons from NADH, via FMN and iron-sulfur (Fe-S) centers, to quinones in the respiratory chain. The immediate electron acceptor for the enzyme in this species is believed to be ubiquinone. Couples the redox reaction to proton translocation (for every two electrons transferred, four hydrogen ions are translocated across the cytoplasmic membrane), and thus conserves the redox energy in a proton gradient. This Paraburkholderia phymatum (strain DSM 17167 / CIP 108236 / LMG 21445 / STM815) (Burkholderia phymatum) protein is NADH-quinone oxidoreductase subunit N.